The following is a 116-amino-acid chain: Hydrogenase maturation factor HypA (116 aa).

H2 is a Ni(2+) binding site. The Zn(2+) site is built by C73, C76, C90, and C93.

The protein belongs to the HypA/HybF family.

Its function is as follows. Involved in the maturation of [NiFe] hydrogenases. Required for nickel insertion into the metal center of the hydrogenase. This Escherichia coli O6:H1 (strain CFT073 / ATCC 700928 / UPEC) protein is Hydrogenase maturation factor HypA.